We begin with the raw amino-acid sequence, 382 residues long: Na(+)/H(+) antiporter NhaA (382 aa).

Transmembrane regions (helical) follow at residues 14–34, 49–69, 87–107, 117–137, 146–166, 171–191, 205–225, 252–272, 285–305, 321–341, and 356–376; these read AGGI…NSSL, MSVS…LIGL, IFPA…YVAF, GWAI…ALLG, VFLL…IAFF, LSVL…LLNA, FILW…GVVL, VAFA…LEGV, VALG…YLAV, IFAV…ISSL, and LGIL…LSIS.

Belongs to the NhaA Na(+)/H(+) (TC 2.A.33) antiporter family.

The protein localises to the cell inner membrane. It carries out the reaction Na(+)(in) + 2 H(+)(out) = Na(+)(out) + 2 H(+)(in). Na(+)/H(+) antiporter that extrudes sodium in exchange for external protons. This Aliivibrio fischeri (strain ATCC 700601 / ES114) (Vibrio fischeri) protein is Na(+)/H(+) antiporter NhaA.